We begin with the raw amino-acid sequence, 214 residues long: RNA-binding protein 38 (214 aa).

The RRM domain maps to 11–88 (TKIFVGGLPY…RKANVNLAYL (78 aa)).

The protein belongs to the RBM38 family. In terms of tissue distribution, strongly expressed in the nervous system. Expressed at early neurula stages of development.

The protein resides in the cytoplasm. It localises to the cytosol. It is found in the nucleus. Functionally, RNA-binding protein that specifically bind the 3'-UTR of VegT transcripts, leading to maintain their stability and stimulate their translation, thereby playing a role in germ layer formation. VegT is a localized maternal determinant essentially required for endoderm formation. Also has some proneural function in the open neural plate and in the context of retinogenesis. May also act as a mRNA splicing factor. May play a role in myogenic differentiation. This Xenopus laevis (African clawed frog) protein is RNA-binding protein 38 (rbm38).